The following is a 250-amino-acid chain: 23S rRNA (guanine(2535)-N(1))-methyltransferase (250 aa).

It carries out the reaction guanosine(2535) in 23S rRNA + S-adenosyl-L-methionine = N(1)-methylguanosine(2535) in 23S rRNA + S-adenosyl-L-homocysteine + H(+). Its function is as follows. Specifically methylates the guanine-2535 in 23S ribosomal RNA. Confers resistance to antibiotic avilamycin, an orthosomycin antibiotic. This chain is 23S rRNA (guanine(2535)-N(1))-methyltransferase (aviRa), found in Streptomyces viridochromogenes.